The following is a 237-amino-acid chain: UPF0173 metal-dependent hydrolase BruAb2_0628 (237 aa).

Belongs to the UPF0173 family.

The protein is UPF0173 metal-dependent hydrolase BruAb2_0628 of Brucella abortus biovar 1 (strain 9-941).